The following is a 72-amino-acid chain: MAFLKKSLLLVLFLGLVSLSICDEEKRENEDEEEQEDDEQSEEKRGMWGTVFKGIKTVAKHLLPHVFSSQQS.

Positions 1 to 22 are cleaved as a signal peptide; that stretch reads MAFLKKSLLLVLFLGLVSLSIC. The propeptide occupies 23 to 43; sequence DEEKRENEDEEEQEDDEQSEE. The tract at residues 24–46 is disordered; that stretch reads EEKRENEDEEEQEDDEQSEEKRG. Acidic residues predominate over residues 30 to 41; the sequence is EDEEEQEDDEQS.

Expressed by the skin glands.

The protein localises to the secreted. Has antibacterial activity against Gram-positive bacterium M.luteus NCT C2665 and against Gram-negative bacterium E.coli K12D31. The polypeptide is Caerin-regulated peptide (Agalychnis callidryas (Red-eyed tree frog)).